The sequence spans 528 residues: Glucose-6-phosphate isomerase (528 aa).

Glu-322 functions as the Proton donor in the catalytic mechanism. Residues His-351 and Lys-455 contribute to the active site.

This sequence belongs to the GPI family.

It localises to the cytoplasm. It catalyses the reaction alpha-D-glucose 6-phosphate = beta-D-fructose 6-phosphate. Its pathway is carbohydrate biosynthesis; gluconeogenesis. It participates in carbohydrate degradation; glycolysis; D-glyceraldehyde 3-phosphate and glycerone phosphate from D-glucose: step 2/4. In terms of biological role, catalyzes the reversible isomerization of glucose-6-phosphate to fructose-6-phosphate. The protein is Glucose-6-phosphate isomerase of Trichormus variabilis (strain ATCC 29413 / PCC 7937) (Anabaena variabilis).